The primary structure comprises 292 residues: Elongation factor Ts (292 aa).

An involved in Mg(2+) ion dislocation from EF-Tu region spans residues 79–82 (TDFV).

This sequence belongs to the EF-Ts family.

Its subcellular location is the cytoplasm. Functionally, associates with the EF-Tu.GDP complex and induces the exchange of GDP to GTP. It remains bound to the aminoacyl-tRNA.EF-Tu.GTP complex up to the GTP hydrolysis stage on the ribosome. In Xylella fastidiosa (strain Temecula1 / ATCC 700964), this protein is Elongation factor Ts.